The chain runs to 64 residues: Large ribosomal subunit protein bL35 (64 aa).

The disordered stretch occupies residues 1–44 (MPKLKTNRGAAKRFKVKASGRISRARSNHSHILTKKDPKRKRRL). The span at 10–44 (AAKRFKVKASGRISRARSNHSHILTKKDPKRKRRL) shows a compositional bias: basic residues.

The protein belongs to the bacterial ribosomal protein bL35 family.

This chain is Large ribosomal subunit protein bL35, found in Halorhodospira halophila (strain DSM 244 / SL1) (Ectothiorhodospira halophila (strain DSM 244 / SL1)).